A 294-amino-acid chain; its full sequence is uncharacterized protein (294 aa).

Residues 1–215 (MTTAITPDKK…DQDDDDQKDL (215 aa)) are disordered. Composition is skewed to basic residues over residues 27–43 (TKPRRSSKTSKKRKSKK) and 50–78 (AKKRKTKRSKKSAKRTKRSAPKKAPKKAP). Residues 79-88 (MKAPSKPAAK) are compositionally biased toward low complexity. The span at 92–102 (QQAQASLQKPI) shows a compositional bias: polar residues. The span at 118–136 (PRPPTPIPPTGVKPEPAPR) shows a compositional bias: pro residues. Low complexity predominate over residues 145 to 160 (SVSSTTPRTSATTGTT).

This is an uncharacterized protein from Caenorhabditis elegans.